Consider the following 273-residue polypeptide: Thiazole synthase (273 aa).

The active-site Schiff-base intermediate with DXP is the Lys111. Residues Gly172, 198 to 199 (AG), and 220 to 221 (NS) each bind 1-deoxy-D-xylulose 5-phosphate. The disordered stretch occupies residues 251–273 (RLPRRGQASASSPTTGLISGKDK). A compositionally biased stretch (polar residues) spans 258-267 (ASASSPTTGL).

It belongs to the ThiG family. As to quaternary structure, homotetramer. Forms heterodimers with either ThiH or ThiS.

Its subcellular location is the cytoplasm. It carries out the reaction [ThiS sulfur-carrier protein]-C-terminal-Gly-aminoethanethioate + 2-iminoacetate + 1-deoxy-D-xylulose 5-phosphate = [ThiS sulfur-carrier protein]-C-terminal Gly-Gly + 2-[(2R,5Z)-2-carboxy-4-methylthiazol-5(2H)-ylidene]ethyl phosphate + 2 H2O + H(+). It participates in cofactor biosynthesis; thiamine diphosphate biosynthesis. Catalyzes the rearrangement of 1-deoxy-D-xylulose 5-phosphate (DXP) to produce the thiazole phosphate moiety of thiamine. Sulfur is provided by the thiocarboxylate moiety of the carrier protein ThiS. In vitro, sulfur can be provided by H(2)S. The sequence is that of Thiazole synthase from Synechococcus sp. (strain CC9902).